A 291-amino-acid polypeptide reads, in one-letter code: Phosphate import ATP-binding protein PstB (291 aa).

Residues 1–17 (MANTNVKEKELAKHTDQ) are compositionally biased toward basic and acidic residues. Residues 1–40 (MANTNVKEKELAKHTDQSQESISTVVSSNEVKHNKESDSN) form a disordered region. Residues 18–29 (SQESISTVVSSN) show a composition bias toward polar residues. The span at 30–40 (EVKHNKESDSN) shows a compositional bias: basic and acidic residues. An ABC transporter domain is found at 45–286 (YSTQNLDLWY…PSDKQTEDYI (242 aa)). 77–84 (GPSGCGKS) is an ATP binding site.

It belongs to the ABC transporter superfamily. Phosphate importer (TC 3.A.1.7) family. In terms of assembly, the complex is composed of two ATP-binding proteins (PstB), two transmembrane proteins (PstC and PstA) and a solute-binding protein (PstS).

The protein localises to the cell membrane. It carries out the reaction phosphate(out) + ATP + H2O = ADP + 2 phosphate(in) + H(+). Functionally, part of the ABC transporter complex PstSACB involved in phosphate import. Responsible for energy coupling to the transport system. The polypeptide is Phosphate import ATP-binding protein PstB (Staphylococcus haemolyticus (strain JCSC1435)).